We begin with the raw amino-acid sequence, 275 residues long: Diaminopimelate epimerase (275 aa).

Residues Asn-20 and Asn-63 each coordinate substrate. The active-site Proton donor is the Cys-72. Substrate is bound by residues 73-74 (GN), Asn-179, and 197-198 (ER). Residue Cys-207 is the Proton acceptor of the active site. 208 to 209 (GT) contributes to the substrate binding site.

This sequence belongs to the diaminopimelate epimerase family. As to quaternary structure, homodimer.

The protein resides in the cytoplasm. It carries out the reaction (2S,6S)-2,6-diaminopimelate = meso-2,6-diaminopimelate. It participates in amino-acid biosynthesis; L-lysine biosynthesis via DAP pathway; DL-2,6-diaminopimelate from LL-2,6-diaminopimelate: step 1/1. Catalyzes the stereoinversion of LL-2,6-diaminopimelate (L,L-DAP) to meso-diaminopimelate (meso-DAP), a precursor of L-lysine and an essential component of the bacterial peptidoglycan. The protein is Diaminopimelate epimerase of Chlamydia trachomatis serovar L2 (strain ATCC VR-902B / DSM 19102 / 434/Bu).